The primary structure comprises 648 residues: RAF proto-oncogene serine/threonine-protein kinase (648 aa).

Serine 29 carries the post-translational modification Phosphoserine; by MAPK1. Serine 43 carries the phosphoserine; by PKA and MAPK1 modification. In terms of domain architecture, RBD spans 56-131 (NTIRVFLPNK…IGEELQVDFL (76 aa)). The Phorbol-ester/DAG-type zinc-finger motif lies at 138–184 (THNFARKTFLKLAFCDICQKFLLNGFRCQTCGYKFHEHCSTKVPTMC). Zn(2+) is bound by residues histidine 139, cysteine 152, cysteine 155, cysteine 165, cysteine 168, histidine 173, cysteine 176, and cysteine 184. The interval 205-265 (GVPAPPSFPM…RSTSTPNVHM (61 aa)) is disordered. Serine 233 is modified (phosphoserine; by PKA). Positions 239-265 (TFNTSSPSSEGSLSQRQRSTSTPNVHM) are enriched in polar residues. Residue serine 252 is modified to Phosphoserine. Residue serine 259 is modified to Phosphoserine; by PKA, PKC and PKB/AKT1. Residue threonine 268 is modified to Phosphothreonine; by autocatalysis. Threonine 269 carries the phosphothreonine; by PKA modification. The interval 281 to 335 (IRSHSESASPSALSSSPNNLSPTGWSQPKTPVPAQRERAPGSGTQEKNKIRPRGQ) is disordered. Residues 286–301 (ESASPSALSSSPNNLS) are compositionally biased toward low complexity. A phosphoserine; by MAPK1 mark is found at serine 289, serine 296, and serine 301. An interaction with PEBP1/RKIP region spans residues 331 to 349 (RPRGQRDSSYYWEIEASEV). The residue at position 338 (serine 338) is a Phosphoserine; by PAK1, PAK2, PAK3 and PAK5. A Phosphoserine; by PAK1, PAK2 and PAK3 modification is found at serine 339. Phosphotyrosine; by SRC occurs at positions 340 and 341. The Protein kinase domain maps to 349–609 (VMLSTRIGSG…PQILSSIELL (261 aa)). ATP-binding positions include 355-363 (IGSGSFGTV) and lysine 375. Residue aspartate 468 is the Proton acceptor of the active site. Position 471 is a phosphoserine (serine 471). Threonine 491 carries the phosphothreonine modification. Position 494 is a phosphoserine (serine 494). Residues serine 497 and serine 499 each carry the phosphoserine; by PKC modification. Arginine 563 carries the symmetric dimethylarginine; by PRMT5 modification. Phosphoserine is present on serine 621. Serine 642 carries the post-translational modification Phosphoserine; by MAPK1.

The protein belongs to the protein kinase superfamily. TKL Ser/Thr protein kinase family. RAF subfamily. In terms of assembly, monomer. Homodimer. Heterodimerizes with BRAF and this heterodimer possesses a highly increased kinase activity compared to the respective homodimers or monomers. Heterodimerization is mitogen-regulated and enhanced by 14-3-3 proteins. MAPK1/ERK2 activation can induce a negative feedback that promotes the dissociation of the heterodimer. Forms a multiprotein complex with Ras (M-Ras/MRAS), SHOC2 and protein phosphatase 1 (PPP1CA, PPP1CB and PPP1CC). Interacts with LZTR1. Interacts with Ras proteins; the interaction is antagonized by RIN1. Weakly interacts with RIT1. Interacts (via N-terminus) with RGS14 (via RBD domains); the interaction mediates the formation of a ternary complex with BRAF, a ternary complex inhibited by GNAI1. Probably forms a complex composed of chaperones HSP90 and HSP70, co-chaperones CDC37, PPP5C, TSC1 and client protein TSC2, CDK4, AKT, RAF1 and NR3C1; this complex does not contain co-chaperones STIP1/HOP and PTGES3/p23. Interacts with STK3/MST2; the interaction inhibits its pro-apoptotic activity. Interacts (when phosphorylated at Ser-259) with YWHAZ (unphosphorylated at 'Thr-232'). Interacts with MAP2K1/MEK1 and MAP2K2/MEK2. Interacts with MAP3K5/ASF1 (via N-terminus) and this interaction inhibits the proapoptotic function of MAP3K5/ASK1. Interacts with PAK1 (via kinase domain). The Ser-338 and Ser-339 phosphorylated form (by PAK1) interacts with BCL2. Interacts with PEBP1/RKIP and this interaction is enhanced if RAF1 is phosphorylated on residues Ser-338, Ser-339, Tyr-340 and Tyr-341. Interacts with ADCY2, ADCY5, ADCY6, DGKH, RCAN1/DSCR1, PPP1R12A, PKB/AKT1, SPRY2, SPRY4, CNKSR1/CNK1, KSR2 and PHB/prohibitin. The phosphorylated form interacts with PIN1. Interacts with PPP2CA, PPP2R1B and ROCK2. In its active form, interacts with PRMT5. Interacts with FAM83B; displaces 14-3-3 proteins from RAF1 and activates RAF1. Interacts with PDE8A; the interaction promotes RAF1 activity. Interacts with MFHAS1. Interacts with GLS. Interacts with NEK10 and MAP2K1; the interaction is direct with NEK10 and required for ERK1/2-signaling pathway activation in response to UV irradiation. Zn(2+) is required as a cofactor. In terms of processing, phosphorylation at Thr-269, Ser-338, Tyr-341, Thr-491 and Ser-494 results in its activation. Phosphorylation at Ser-29, Ser-43, Ser-289, Ser-296, Ser-301 and Ser-642 by MAPK1/ERK2 results in its inactivation. Phosphorylation at Ser-259 induces the interaction with YWHAZ and inactivates kinase activity. Dephosphorylation of Ser-259 by the SHOC2-MRAS-PP1c (SMP) complex consisting of SHOC2, GTP-bound M-Ras/MRAS and the catalytic subunit of protein phosphatase 1 (PPP1CA, PPP1CB or PPP1CC); this relieves inactivation and stimulates kinase activity. Phosphorylation at Ser-338 by PAK1 and PAK5 and Ser-339 by PAK1 is required for its mitochondrial localization. Phosphorylation at Ser-621 in response to growth factor treatment stabilizes the protein, possibly by preventing proteasomal degradation. Phosphorylation at Ser-289, Ser-296, Ser-301, Ser-338 and Ser-621 are somehow linked to the methylation potential of cells. Treatment of cells with HGF in the presence of the methylation inhibitor 5'-methylthioadenosine (MTA) results in increased phosphorylation at Ser-338 and Ser-621 and decreased phosphorylation at Ser-296, Ser-301 and Ser-338. Dephosphorylation at Ser-338 by PPP5C results in a decreased of activity. Methylated at Arg-563 in response to EGF treatment. This modification leads to destabilization of the protein, possibly through proteasomal degradation. As to expression, present in all tissues tested: testis, ovary, small intestine, colon, peripheral blood leukocytes, fetal liver, bone marrow, thymus, lymph node and spleen, and the cell lines melanoma G-361, lung carcinoma A-549, colorectal adenocarcinoma SW480, Burkitt's lymphoma Raji and lymphoblastic leukemia MOLT-4. In skeletal muscle, isoform 1 is more abundant than isoform 2.

The protein resides in the cytoplasm. The protein localises to the cell membrane. Its subcellular location is the mitochondrion. It localises to the nucleus. It catalyses the reaction L-seryl-[protein] + ATP = O-phospho-L-seryl-[protein] + ADP + H(+). It carries out the reaction L-threonyl-[protein] + ATP = O-phospho-L-threonyl-[protein] + ADP + H(+). Regulation is a highly complex process involving membrane recruitment, protein-protein interactions, dimerization, and phosphorylation/dephosphorylation events. Ras-GTP recruits RAF1 to the membrane, thereby promoting its activation. The inactive conformation of RAF1 is maintained by autoinhibitory interactions occurring between the N-terminal regulatory and the C-terminal catalytic domains and by the binding of a 14-3-3 protein that contacts two phosphorylation sites, Ser-259 and Ser-621. Upon mitogenic stimulation, Ras and PPP2R1A cooperate to release autoinhibition and the subsequent phosphorylation of activating sites: Ser-338, Tyr-341, Thr-491, and Ser-494, yields a fully active kinase. Through a negative feedback mechanism involving MAPK1/ERK2, RAF1 is phosphorylated on Ser-29, Ser-43, Ser-289, Ser-296, Ser-301 and Ser-642 by MAPK1/ERK2, which yields an inactive, desensitized kinase. The signaling-competent conformation of RAF1 is finally re-established by the coordinated action of PIN1, a prolyl isomerase that converts pSer and pThr residues from the cis to the trans conformation, which is preferentially recognized and dephosphorylated by PPP2R1A. Activated by homodimerization and heterodimerization (with BRAF). Also regulated through association with other proteins such as KSR2, CNKSR1/CNK1, PEBP1/RKIP, PHB/prohibitin and SPRY4. PEBP1/RKIP acts by dissociating RAF1 from its substrates MAP2K1/MEK1 and MAP2K2/MEK2. PHB/prohibitin facilitates the displacement of 14-3-3 from RAF1 by activated Ras, thereby promoting cell membrane localization and phosphorylation of RAF1 at the activating Ser-338. SPRY4 inhibits Ras-independent, but not Ras-dependent, activation of RAF1. CNKSR1/CNK1 regulates Src-mediated RAF1 activation. Functionally, serine/threonine-protein kinase that acts as a regulatory link between the membrane-associated Ras GTPases and the MAPK/ERK cascade, and this critical regulatory link functions as a switch determining cell fate decisions including proliferation, differentiation, apoptosis, survival and oncogenic transformation. RAF1 activation initiates a mitogen-activated protein kinase (MAPK) cascade that comprises a sequential phosphorylation of the dual-specific MAPK kinases (MAP2K1/MEK1 and MAP2K2/MEK2) and the extracellular signal-regulated kinases (MAPK3/ERK1 and MAPK1/ERK2). The phosphorylated form of RAF1 (on residues Ser-338 and Ser-339, by PAK1) phosphorylates BAD/Bcl2-antagonist of cell death at 'Ser-75'. Phosphorylates adenylyl cyclases: ADCY2, ADCY5 and ADCY6, resulting in their activation. Phosphorylates PPP1R12A resulting in inhibition of the phosphatase activity. Phosphorylates TNNT2/cardiac muscle troponin T. Can promote NF-kB activation and inhibit signal transducers involved in motility (ROCK2), apoptosis (MAP3K5/ASK1 and STK3/MST2), proliferation and angiogenesis (RB1). Can protect cells from apoptosis also by translocating to the mitochondria where it binds BCL2 and displaces BAD/Bcl2-antagonist of cell death. Plays a role in the oncogenic transformation of epithelial cells via repression of the TJ protein, occludin (OCLN) by inducing the up-regulation of a transcriptional repressor SNAI2/SLUG, which induces down-regulation of OCLN. Restricts caspase activation in response to selected stimuli, notably Fas stimulation, pathogen-mediated macrophage apoptosis, and erythroid differentiation. Regulates Rho signaling and migration, and is required for normal wound healing. The polypeptide is RAF proto-oncogene serine/threonine-protein kinase (Raf1) (Mus musculus (Mouse)).